A 371-amino-acid polypeptide reads, in one-letter code: Alanine racemase (371 aa).

The active-site Proton acceptor; specific for D-alanine is lysine 40. Lysine 40 bears the N6-(pyridoxal phosphate)lysine mark. Arginine 138 lines the substrate pocket. Tyrosine 267 functions as the Proton acceptor; specific for L-alanine in the catalytic mechanism. Methionine 314 is a binding site for substrate.

This sequence belongs to the alanine racemase family. The cofactor is pyridoxal 5'-phosphate.

It carries out the reaction L-alanine = D-alanine. The protein operates within amino-acid biosynthesis; D-alanine biosynthesis; D-alanine from L-alanine: step 1/1. In terms of biological role, catalyzes the interconversion of L-alanine and D-alanine. May also act on other amino acids. The polypeptide is Alanine racemase (alr) (Ligilactobacillus salivarius (strain UCC118) (Lactobacillus salivarius)).